A 231-amino-acid chain; its full sequence is 7-cyano-7-deazaguanine synthase (231 aa).

Phe8 to Leu18 lines the ATP pocket. 4 residues coordinate Zn(2+): Cys188, Cys197, Cys200, and Cys203.

It belongs to the QueC family. It depends on Zn(2+) as a cofactor.

The catalysed reaction is 7-carboxy-7-deazaguanine + NH4(+) + ATP = 7-cyano-7-deazaguanine + ADP + phosphate + H2O + H(+). It functions in the pathway purine metabolism; 7-cyano-7-deazaguanine biosynthesis. Its function is as follows. Catalyzes the ATP-dependent conversion of 7-carboxy-7-deazaguanine (CDG) to 7-cyano-7-deazaguanine (preQ(0)). The chain is 7-cyano-7-deazaguanine synthase from Enterobacter sp. (strain 638).